Consider the following 898-residue polypeptide: Zinc finger protein 574 (898 aa).

3 C2H2-type zinc fingers span residues 16–38 (YVCS…QNSH), 76–98 (YQCL…QELH), and 126–148 (YECV…RQTH). Ser-164 is subject to Phosphoserine. The segment at 213–235 (YKCSECSQLFQMPADFLEHQATH) adopts a C2H2-type 4 zinc-finger fold. Residues 243–305 (AEEPATQQET…PRRSSSGESG (63 aa)) form a disordered region. Positions 273–290 (HSYELRNELRNGEAMGRD) are enriched in basic and acidic residues. A Phosphoserine modification is found at Ser-301. C2H2-type zinc fingers lie at residues 310 to 332 (LFCS…LRSH), 337 to 359 (FKCP…LGDH), 365 to 387 (FLCV…RRAH), and 393 to 414 (HSCP…RRTH). Residues 417–460 (GGVPLPTTPVPPEEPAISFPEPAPAETGELEAPELPVSEESSAE) are disordered. C2H2-type zinc fingers lie at residues 467–490 (YRCL…RFVH), 496–518 (HKCS…LRTH), 524–546 (FPCP…RLTH), 552–574 (YRCG…RLVH), 580–602 (YRCQ…RYHH), and 608–631 (YKCR…LVVH). The C2H2-type 15; degenerate zinc-finger motif lies at 637 to 660 (HRCPSCGAAFPSSLRLREHRCAAA). The segment at 668 to 690 (FECGTCGKKVGSAARLQAHEAAH) adopts a C2H2-type 16 zinc-finger fold. A disordered region spans residues 691 to 735 (AAAGPGEVLAKEPPAPRAARATRTPVAPSPTALGGTTSAAPAAPA). Over residues 707-734 (RAARATRTPVAPSPTALGGTTSAAPAAP) the composition is skewed to low complexity. Residue Ser-719 is modified to Phosphoserine. Thr-726 carries the phosphothreonine modification. 4 C2H2-type zinc fingers span residues 740-762 (LECS…RRIH), 768-790 (YPCP…RRLH), 796-818 (FACE…RRIH), and 824-846 (YSCP…RKTH). At Arg-834 the chain carries Asymmetric dimethylarginine.

The protein belongs to the krueppel C2H2-type zinc-finger protein family.

The protein localises to the nucleus. Its function is as follows. May be involved in transcriptional regulation. The sequence is that of Zinc finger protein 574 (Znf574) from Rattus norvegicus (Rat).